Here is a 229-residue protein sequence, read N- to C-terminus: Molybdenum transport system permease protein ModB (229 aa).

The ABC transmembrane type-1 domain maps to 6 to 214; that stretch reads INLSLSVAVS…LISLLLSEWL (209 aa). A run of 5 helical transmembrane segments spans residues 12–32, 45–65, 83–103, 132–152, and 196–216; these read VAVSSMLWSLPLAIFVAWLLA, VIHLPLVLPPVVIGYLLLVAM, FGFSWKGAVLSSAVVAFPLVV, FFTITLPLSLPGVLAGLVLGF, and LCLFAIILSLISLLLSEWLSK.

The protein belongs to the binding-protein-dependent transport system permease family. CysTW subfamily.

The protein localises to the cell inner membrane. Functionally, part of the binding-protein-dependent transport system for molybdenum; probably responsible for the translocation of the substrate across the membrane. The polypeptide is Molybdenum transport system permease protein ModB (modB) (Haemophilus influenzae (strain ATCC 51907 / DSM 11121 / KW20 / Rd)).